The primary structure comprises 160 residues: Cytochrome b6-f complex subunit 4 (160 aa).

3 helical membrane passes run 36-56 (LLYI…GLGV), 95-115 (LLGV…PFIE), and 131-151 (LVFL…TMPI).

Belongs to the cytochrome b family. PetD subfamily. The 4 large subunits of the cytochrome b6-f complex are cytochrome b6, subunit IV (17 kDa polypeptide, petD), cytochrome f and the Rieske protein, while the 4 small subunits are petG, petL, petM and petN. The complex functions as a dimer.

Its subcellular location is the plastid. It is found in the chloroplast thylakoid membrane. Functionally, component of the cytochrome b6-f complex, which mediates electron transfer between photosystem II (PSII) and photosystem I (PSI), cyclic electron flow around PSI, and state transitions. The chain is Cytochrome b6-f complex subunit 4 from Emiliania huxleyi (Coccolithophore).